A 167-amino-acid polypeptide reads, in one-letter code: Protein FimG (167 aa).

The N-terminal stretch at 1-23 is a signal peptide; it reads MKWCKRGYVLAAILALASATIQA. Cys-39 and Cys-77 are disulfide-bonded.

Belongs to the fimbrial protein family.

It is found in the fimbrium. Involved in regulation of length and mediation of adhesion of type 1 fimbriae (but not necessary for the production of fimbriae). Involved in the integration of FimH in the fimbriae. This is Protein FimG (fimG) from Escherichia coli (strain K12).